A 124-amino-acid chain; its full sequence is UPF0212 protein Hlac_0869 (124 aa).

The protein belongs to the UPF0212 family.

This Halorubrum lacusprofundi (strain ATCC 49239 / DSM 5036 / JCM 8891 / ACAM 34) protein is UPF0212 protein Hlac_0869.